A 449-amino-acid chain; its full sequence is Trigger factor (449 aa).

Residues 162–242 form the PPIase FKBP-type domain; that stretch reads GDFVTIDMTV…VRAVREKQVP (81 aa). Positions 428-449 are disordered; it reads APVNLEGGSTPAAEAEPAVSEA. The span at 438 to 449 shows a compositional bias: low complexity; that stretch reads PAAEAEPAVSEA.

This sequence belongs to the FKBP-type PPIase family. Tig subfamily.

It is found in the cytoplasm. It carries out the reaction [protein]-peptidylproline (omega=180) = [protein]-peptidylproline (omega=0). Functionally, involved in protein export. Acts as a chaperone by maintaining the newly synthesized protein in an open conformation. Functions as a peptidyl-prolyl cis-trans isomerase. The sequence is that of Trigger factor from Acidothermus cellulolyticus (strain ATCC 43068 / DSM 8971 / 11B).